Here is a 375-residue protein sequence, read N- to C-terminus: Sperm microtubule associated protein 2 (375 aa).

A disordered region spans residues 1 to 78; that stretch reads MGELGEHRAS…MAGEELPETS (78 aa). Positions 59–75 are enriched in acidic residues; the sequence is EPEEEIPPEEMAGEELP. 7 THEG repeats span residues 110–129, 176–195, 214–233, 250–269, 282–301, 318–337, and 352–371; these read AKGR…PKTN, TITV…PKRF, STLE…PKVR, AAQM…PRPP, PKPY…PKAL, VTKN…PKIR, and ASLV…PKYI. S287 bears the Phosphoserine mark.

In terms of assembly, interacts with CCT5. In terms of tissue distribution, testis specific (at protein level). Specifically expressed in spermatids; Sertoli cells maintain the level of expression in spermatids. If isolated spermatids are cultivated for 16 hours alone, the expression of THEG is down-regulated. May require signals from Sertoli cells to initiate changes in its gene expression through spermatogenesis.

The protein resides in the nucleus. Functionally, may be involved (but not essential) in spermatogenesis. This is Sperm microtubule associated protein 2 from Mus musculus (Mouse).